The following is a 592-amino-acid chain: Solute carrier family 13 member 2 (592 aa).

A run of 4 helical transmembrane segments spans residues 13-33, 53-73, 86-106, and 114-134; these read SYLI…LVPS, ALPL…MGIV, SNLL…WNLH, and LLIV…VTAF. The segment covering 165-177 has biased composition (polar residues); that stretch reads SSNVEEGSNNPTF. The tract at residues 165–185 is disordered; it reads SSNVEEGSNNPTFELQEPSPQ. 8 helical membrane passes run 221–241, 274–294, 324–344, 371–391, 450–470, 482–502, 511–531, and 545–565; these read MSLC…TGTA, MVIL…GFNF, PMTF…LLWF, GTVA…FPGL, PLQS…VATF, IFLP…LYVM, LAFM…FGDL, and IIGV…LFSL.

This sequence belongs to the SLC13A/DASS transporter (TC 2.A.47) family. NADC subfamily. Expressed in kidney and intestine. In kidney expressed in the proximal tubule (at protein level).

It is found in the apical cell membrane. The enzyme catalyses succinate(out) + 3 Na(+)(out) = succinate(in) + 3 Na(+)(in). It catalyses the reaction fumarate(out) + 3 Na(+)(out) = fumarate(in) + 3 Na(+)(in). It carries out the reaction 2-oxoglutarate(out) + 3 Na(+)(out) = 2-oxoglutarate(in) + 3 Na(+)(in). With respect to regulation, li(+) decreases succinate transport in the presence of Na(+), by competing at one of the three cation binding sites. Its function is as follows. Low-affinity sodium-dicarboxylate cotransporter, that mediates the entry of citric acid cycle intermediates, such as succinate, citrate, fumarate and alpha-ketoglutarate (2-oxoglutarate) into the small intestine and renal proximal tubule. Transports the dicarboxylate into the cell with a probable stoichiometry of 3 Na(+) for 1 divalent dicarboxylate, rendering the process electrogenic. Citrate is transported in protonated form as a divalent anion, rather than the trivalent form which is normally found in blood. Has a critical role in renal dicarboxylate transport. The polypeptide is Solute carrier family 13 member 2 (SLC13A2) (Homo sapiens (Human)).